The primary structure comprises 359 residues: tRNA-specific 2-thiouridylase MnmA (359 aa).

ATP is bound by residues 9-16 (GISGGVDS) and Met-35. The tract at residues 95-97 (NPD) is interaction with target base in tRNA. The Nucleophile role is filled by Cys-100. Cys-100 and Cys-197 are oxidised to a cystine. Gly-124 is an ATP binding site. Residues 147 to 149 (KDQ) are interaction with tRNA. The Cysteine persulfide intermediate role is filled by Cys-197. The tract at residues 309-310 (RY) is interaction with tRNA.

The protein belongs to the MnmA/TRMU family.

The protein localises to the cytoplasm. It carries out the reaction S-sulfanyl-L-cysteinyl-[protein] + uridine(34) in tRNA + AH2 + ATP = 2-thiouridine(34) in tRNA + L-cysteinyl-[protein] + A + AMP + diphosphate + H(+). Functionally, catalyzes the 2-thiolation of uridine at the wobble position (U34) of tRNA, leading to the formation of s(2)U34. This is tRNA-specific 2-thiouridylase MnmA from Francisella tularensis subsp. tularensis (strain FSC 198).